A 487-amino-acid chain; its full sequence is WRKY transcription factor 1 (487 aa).

The disordered stretch occupies residues glutamine 69–phenylalanine 104. Serine 76 carries the phosphoserine modification. Polar residues predominate over residues serine 86–asparagine 101. The segment at residues isoleucine 105–proline 169 is a DNA-binding region (WRKY 1). Zn(2+) is bound by residues cysteine 136, cysteine 141, histidine 164, and histidine 166. The disordered stretch occupies residues serine 255–glutamate 287. The short motif at lysine 273–lysine 277 is the Nuclear localization signal element. Residues threonine 301 to proline 366 constitute a DNA-binding region (WRKY 2). The Zn(2+) site is built by cysteine 332, cysteine 337, histidine 361, and histidine 363. The tract at residues glutamate 380–serine 487 is disordered. Residues lysine 390 to threonine 401 are compositionally biased toward polar residues. Basic and acidic residues-rich tracts occupy residues leucine 429–threonine 462 and glutamate 476–serine 487.

It belongs to the WRKY group I family. As to expression, expressed to similar levels in root and flower, to a somewhat lower level in stem and to low levels in leaf and siliques.

Its subcellular location is the nucleus. In terms of biological role, transcription factor. Binds to a 5'-CGTTGACCGAG-3' consensus core sequence which contains a W box, a frequently occurring elicitor-responsive cis-acting element. This Arabidopsis thaliana (Mouse-ear cress) protein is WRKY transcription factor 1.